We begin with the raw amino-acid sequence, 365 residues long: tRNA(Met) cytidine acetate ligase (365 aa).

ATP contacts are provided by residues 7–20 (IAEFNPFHNGHKYL), G96, N152, and R175.

Belongs to the TmcAL family.

It is found in the cytoplasm. It carries out the reaction cytidine(34) in elongator tRNA(Met) + acetate + ATP = N(4)-acetylcytidine(34) in elongator tRNA(Met) + AMP + diphosphate. In terms of biological role, catalyzes the formation of N(4)-acetylcytidine (ac(4)C) at the wobble position of elongator tRNA(Met), using acetate and ATP as substrates. First activates an acetate ion to form acetyladenylate (Ac-AMP) and then transfers the acetyl group to tRNA to form ac(4)C34. This Streptococcus pneumoniae (strain ATCC BAA-255 / R6) protein is tRNA(Met) cytidine acetate ligase.